The chain runs to 483 residues: V-type proton ATPase subunit B 2 (483 aa).

This sequence belongs to the ATPase alpha/beta chains family. In terms of assembly, V-ATPase is a heteromultimeric enzyme composed of a peripheral catalytic V1 complex (main components: subunits A, B, C, D, E, and F) attached to an integral membrane V0 proton pore complex (main component: the proteolipid protein).

Functionally, non-catalytic subunit of the peripheral V1 complex of vacuolar ATPase. V-ATPase is responsible for acidifying a variety of intracellular compartments in eukaryotic cells. The sequence is that of V-type proton ATPase subunit B 2 from Hordeum vulgare (Barley).